The sequence spans 429 residues: 3-phosphoshikimate 1-carboxyvinyltransferase (429 aa).

3-phosphoshikimate is bound by residues lysine 20, serine 21, and arginine 25. Lysine 20 lines the phosphoenolpyruvate pocket. The phosphoenolpyruvate site is built by glycine 89 and arginine 118. 3-phosphoshikimate contacts are provided by serine 164, serine 165, glutamine 166, serine 192, aspartate 311, and lysine 338. Position 166 (glutamine 166) interacts with phosphoenolpyruvate. Aspartate 311 (proton acceptor) is an active-site residue. Phosphoenolpyruvate is bound by residues arginine 342 and arginine 384.

Belongs to the EPSP synthase family. In terms of assembly, monomer.

Its subcellular location is the cytoplasm. It carries out the reaction 3-phosphoshikimate + phosphoenolpyruvate = 5-O-(1-carboxyvinyl)-3-phosphoshikimate + phosphate. It functions in the pathway metabolic intermediate biosynthesis; chorismate biosynthesis. Functionally, catalyzes the transfer of the enolpyruvyl moiety of phosphoenolpyruvate (PEP) to the 5-hydroxyl of shikimate-3-phosphate (S3P) to produce enolpyruvyl shikimate-3-phosphate and inorganic phosphate. This is 3-phosphoshikimate 1-carboxyvinyltransferase from Methanococcus maripaludis (strain DSM 14266 / JCM 13030 / NBRC 101832 / S2 / LL).